The following is a 429-amino-acid chain: 4-hydroxyphenylacetate degradation bifunctional isomerase/decarboxylase (429 aa).

Approximate repeat units lie at residues 1–215 (MKGT…NQTF) and 216–429 (TWPL…ESAN). A divalent metal cation contacts are provided by Glu-276, Glu-278, and Asp-307.

The protein belongs to the FAH family. Monomer. Requires Mg(2+) as cofactor.

It catalyses the reaction (2E,4Z)-5-hydroxypenta-2,4-diene-1,2,5-tricarboxylate = (3E,5R)-5-carboxy-2-oxohept-3-enedioate. The catalysed reaction is (3E,5R)-5-carboxy-2-oxohept-3-enedioate + H(+) = (4Z)-2-oxohept-4-enedioate + CO2. The protein operates within aromatic compound metabolism; 4-hydroxyphenylacetate degradation; pyruvate and succinate semialdehyde from 4-hydroxyphenylacetate: step 4/7. Its pathway is aromatic compound metabolism; 4-hydroxyphenylacetate degradation; pyruvate and succinate semialdehyde from 4-hydroxyphenylacetate: step 5/7. In terms of biological role, decarboxylates OPET (5-oxo-pent-3-ene-1,2,5-tricarboxylic acid) into HHDD (2-hydroxy-hept-2,4-diene-1,7-dioate) and isomerizes it to OHED (2-oxo-hept-3-ene-1,7-dioate). This Salmonella dublin protein is 4-hydroxyphenylacetate degradation bifunctional isomerase/decarboxylase (hpaG).